The sequence spans 374 residues: MALRSLIADARRLVVKVGSSLVTDDGRGLDQAAIARWAAQIAALRAAGKEVVLVSSGAIAEGMQRLGWTRRPKEIHELQAAAAVGQMGLAQVYESEFARHGIRTAQVLLTHGDLADRERYLNARSTLLTLLGLGVVPIINENDTVVTDEIKFGDNDTLGALVTNLIEGDALIILTDQRGLYTADPRKHPDARFVDEAQAGAPELEAMAGGAGSSIGKGGMLTKIVAAKRAAKSGAHTVIASGREADVLARLAGGEAIGTQLRAPTGRMAARKQWMIDHLQLRGRVVLDAGAVDKLTAGGKSLLPIGVTEVQGEFARGEVISCVDTAGREVARGLTNYSAAEARLIARKASSEIEAVLGYVSAAELVHRDNLVLL.

Lys16 provides a ligand contact to ATP. Ser56, Asp143, and Asn155 together coordinate substrate. 175 to 176 (TD) is a binding site for ATP. Positions 282 to 360 (RGRVVLDAGA…SEIEAVLGYV (79 aa)) constitute a PUA domain.

Belongs to the glutamate 5-kinase family.

It localises to the cytoplasm. The catalysed reaction is L-glutamate + ATP = L-glutamyl 5-phosphate + ADP. It functions in the pathway amino-acid biosynthesis; L-proline biosynthesis; L-glutamate 5-semialdehyde from L-glutamate: step 1/2. Its function is as follows. Catalyzes the transfer of a phosphate group to glutamate to form L-glutamate 5-phosphate. The sequence is that of Glutamate 5-kinase from Ralstonia nicotianae (strain ATCC BAA-1114 / GMI1000) (Ralstonia solanacearum).